Here is a 206-residue protein sequence, read N- to C-terminus: FMN-dependent NADH:quinone oxidoreductase (206 aa).

FMN is bound by residues serine 10, 16–18 (SSS), 93–96 (MYNF), and 137–140 (TRGG).

The protein belongs to the azoreductase type 1 family. As to quaternary structure, homodimer. FMN serves as cofactor.

It catalyses the reaction 2 a quinone + NADH + H(+) = 2 a 1,4-benzosemiquinone + NAD(+). The enzyme catalyses N,N-dimethyl-1,4-phenylenediamine + anthranilate + 2 NAD(+) = 2-(4-dimethylaminophenyl)diazenylbenzoate + 2 NADH + 2 H(+). Its function is as follows. Quinone reductase that provides resistance to thiol-specific stress caused by electrophilic quinones. Also exhibits azoreductase activity. Catalyzes the reductive cleavage of the azo bond in aromatic azo compounds to the corresponding amines. The polypeptide is FMN-dependent NADH:quinone oxidoreductase (Psychromonas ingrahamii (strain DSM 17664 / CCUG 51855 / 37)).